We begin with the raw amino-acid sequence, 570 residues long: Hydroxylamine reductase (570 aa).

[4Fe-4S] cluster contacts are provided by cysteine 5, cysteine 8, cysteine 17, and cysteine 23. Hybrid [4Fe-2O-2S] cluster is bound by residues histidine 266, glutamate 290, cysteine 334, cysteine 425, cysteine 453, cysteine 478, glutamate 513, and lysine 515. Residue cysteine 425 is modified to Cysteine persulfide.

This sequence belongs to the HCP family. It depends on [4Fe-4S] cluster as a cofactor. Requires hybrid [4Fe-2O-2S] cluster as cofactor.

It is found in the cytoplasm. It carries out the reaction A + NH4(+) + H2O = hydroxylamine + AH2 + H(+). Functionally, catalyzes the reduction of hydroxylamine to form NH(3) and H(2)O. In Clostridium botulinum (strain Okra / Type B1), this protein is Hydroxylamine reductase.